We begin with the raw amino-acid sequence, 417 residues long: Ribonucleoside-diphosphate reductase small chain (417 aa).

Fe cation-binding residues include aspartate 168, glutamate 199, and histidine 202. The active site involves tyrosine 206. Fe cation-binding residues include glutamate 261, glutamate 297, and histidine 300.

This sequence belongs to the ribonucleoside diphosphate reductase small chain family. Heterotetramer composed of a homodimer of the large subunit (R1) and a homodimer of the small subunit (R2). Larger multisubunit protein complex are also active, composed of (R1)n(R2)n. Fe cation serves as cofactor.

The catalysed reaction is a 2'-deoxyribonucleoside 5'-diphosphate + [thioredoxin]-disulfide + H2O = a ribonucleoside 5'-diphosphate + [thioredoxin]-dithiol. Ribonucleoside-diphosphate reductase holoenzyme provides the precursors necessary for viral DNA synthesis. Allows virus growth in non-dividing cells. Catalyzes the biosynthesis of deoxyribonucleotides from the corresponding ribonucleotides. The chain is Ribonucleoside-diphosphate reductase small chain (RNR2) from Acanthamoeba polyphaga mimivirus (APMV).